The primary structure comprises 512 residues: Cytoplasmic tRNA 2-thiolation protein 2-A (512 aa).

The protein belongs to the CTU2/NCS2 family.

The protein resides in the cytoplasm. It functions in the pathway tRNA modification; 5-methoxycarbonylmethyl-2-thiouridine-tRNA biosynthesis. Plays a central role in 2-thiolation of mcm(5)S(2)U at tRNA wobble positions of tRNA(Lys), tRNA(Glu) and tRNA(Gln). May act by forming a heterodimer with ctu1/atpbd3 that ligates sulfur from thiocarboxylated urm1 onto the uridine of tRNAs at wobble position. The protein is Cytoplasmic tRNA 2-thiolation protein 2-A (ctu2-a) of Xenopus laevis (African clawed frog).